We begin with the raw amino-acid sequence, 227 residues long: Cytochrome c oxidase subunit 2 (227 aa).

At 1-14 the chain is on the mitochondrial intermembrane side; it reads MAHPVQLGLQDATS. The chain crosses the membrane as a helical span at residues 15–45; it reads PVMEELITFHDHALMAMSLISLLVLYALFST. Over 46–59 the chain is Mitochondrial matrix; sequence LTTKLTNTNITDAQ. A helical membrane pass occupies residues 60–87; the sequence is EMEIIWTILPAIILVLIALPSLRILYLT. At 88–227 the chain is on the mitochondrial intermembrane side; it reads DEVNNPSFTI…IFEMGPVFTL (140 aa). Cu cation is bound by residues histidine 161, cysteine 196, glutamate 198, cysteine 200, histidine 204, and methionine 207. Mg(2+) is bound at residue glutamate 198.

The protein belongs to the cytochrome c oxidase subunit 2 family. Component of the cytochrome c oxidase (complex IV, CIV), a multisubunit enzyme composed of 14 subunits. The complex is composed of a catalytic core of 3 subunits MT-CO1, MT-CO2 and MT-CO3, encoded in the mitochondrial DNA, and 11 supernumerary subunits COX4I, COX5A, COX5B, COX6A, COX6B, COX6C, COX7A, COX7B, COX7C, COX8 and NDUFA4, which are encoded in the nuclear genome. The complex exists as a monomer or a dimer and forms supercomplexes (SCs) in the inner mitochondrial membrane with NADH-ubiquinone oxidoreductase (complex I, CI) and ubiquinol-cytochrome c oxidoreductase (cytochrome b-c1 complex, complex III, CIII), resulting in different assemblies (supercomplex SCI(1)III(2)IV(1) and megacomplex MCI(2)III(2)IV(2)). Found in a complex with TMEM177, COA6, COX18, COX20, SCO1 and SCO2. Interacts with TMEM177 in a COX20-dependent manner. Interacts with COX20. Interacts with COX16. Cu cation is required as a cofactor.

The protein resides in the mitochondrion inner membrane. It catalyses the reaction 4 Fe(II)-[cytochrome c] + O2 + 8 H(+)(in) = 4 Fe(III)-[cytochrome c] + 2 H2O + 4 H(+)(out). Its function is as follows. Component of the cytochrome c oxidase, the last enzyme in the mitochondrial electron transport chain which drives oxidative phosphorylation. The respiratory chain contains 3 multisubunit complexes succinate dehydrogenase (complex II, CII), ubiquinol-cytochrome c oxidoreductase (cytochrome b-c1 complex, complex III, CIII) and cytochrome c oxidase (complex IV, CIV), that cooperate to transfer electrons derived from NADH and succinate to molecular oxygen, creating an electrochemical gradient over the inner membrane that drives transmembrane transport and the ATP synthase. Cytochrome c oxidase is the component of the respiratory chain that catalyzes the reduction of oxygen to water. Electrons originating from reduced cytochrome c in the intermembrane space (IMS) are transferred via the dinuclear copper A center (CU(A)) of subunit 2 and heme A of subunit 1 to the active site in subunit 1, a binuclear center (BNC) formed by heme A3 and copper B (CU(B)). The BNC reduces molecular oxygen to 2 water molecules using 4 electrons from cytochrome c in the IMS and 4 protons from the mitochondrial matrix. The polypeptide is Cytochrome c oxidase subunit 2 (MT-CO2) (Cercocebus galeritus (Tana river mangabey)).